We begin with the raw amino-acid sequence, 446 residues long: FAD-dependent monooxygenase eupB (446 aa).

Residues 10–30 (EPHIAIVGGGIVGVILTLGLL) form a helical membrane-spanning segment. Asn-33 is a glycosylation site (N-linked (GlcNAc...) asparagine). Glu-40, Ala-53, and Arg-125 together coordinate FAD. Catalysis depends on residues Arg-206 and Tyr-239. An N-linked (GlcNAc...) asparagine glycan is attached at Asn-243. Residues Asp-322 and Ala-335 each coordinate FAD. Asn-395 carries N-linked (GlcNAc...) asparagine glycosylation.

Belongs to the paxM FAD-dependent monooxygenase family. FAD serves as cofactor.

It is found in the membrane. It participates in secondary metabolite biosynthesis; terpenoid biosynthesis. FAD-dependent monooxygenase; part of the gene cluster that mediates the biosynthesis of eupenifeldin, a bistropolone meroterpenoid that acts as an antitumor agent. The first step of eupenifeldin biosynthesis is the biosynthesis of 3-methylorcinaldehyde performed by the non-reducing polyketide synthase eupA. Oxidative dearomatization of 3-methylorcinaldehyde likely catalyzed by the FAD-dependent monooxygenase eupB is followed by oxidative ring expansion by the 2-oxoglutarate-dependent dioxygenase eupC to provide the first tropolone metabolite, tropolone stipitaldehyde. In parallel, generation of sesquiterpene alpha-humulene from farnesylpyrophosphate (FPP) is catalyzed by the terpene cyclase eupE. The cytochrome P450 monooxygenase eupD then hydroxylates humulene to humulenol. The putative Diels-Alderase eupF probably catalyzes the formation of the tropolone-humulene skeleton by linking humulenol and the polyketide moiety. The short-chain dehydrogenase/reductase eupG and the flavin-dependent monooxygenase eupH are also essential for eupenifeldin biosynthesis and are likely the additional decorating enzymes of the tropolone-humulene skeleton to produce final eupenifeldin or derivatives. The chain is FAD-dependent monooxygenase eupB from Phoma sp.